The sequence spans 495 residues: Probable cytochrome P450 508C1 (495 aa).

Residues 3–21 (LLNSLLLLFLIYLIHSFYI) traverse the membrane as a helical segment. Heme is bound at residue Cys442.

Belongs to the cytochrome P450 family. Requires heme as cofactor.

It localises to the membrane. This is Probable cytochrome P450 508C1 (cyp508C1) from Dictyostelium discoideum (Social amoeba).